The primary structure comprises 436 residues: ATP-dependent protease ATPase subunit HslU (436 aa).

Residues Ile18, 60–65, Asp249, Glu314, and Arg386 each bind ATP; that span reads GVGKTE.

This sequence belongs to the ClpX chaperone family. HslU subfamily. As to quaternary structure, a double ring-shaped homohexamer of HslV is capped on each side by a ring-shaped HslU homohexamer. The assembly of the HslU/HslV complex is dependent on binding of ATP.

The protein resides in the cytoplasm. In terms of biological role, ATPase subunit of a proteasome-like degradation complex; this subunit has chaperone activity. The binding of ATP and its subsequent hydrolysis by HslU are essential for unfolding of protein substrates subsequently hydrolyzed by HslV. HslU recognizes the N-terminal part of its protein substrates and unfolds these before they are guided to HslV for hydrolysis. The protein is ATP-dependent protease ATPase subunit HslU of Ruegeria sp. (strain TM1040) (Silicibacter sp.).